Consider the following 1401-residue polypeptide: DNA-directed RNA polymerase subunit beta' (1401 aa).

The Zn(2+) site is built by cysteine 70, cysteine 72, cysteine 85, and cysteine 88. Mg(2+) is bound by residues aspartate 460, aspartate 462, and aspartate 464. Positions 808, 882, 889, and 892 each coordinate Zn(2+).

It belongs to the RNA polymerase beta' chain family. The RNAP catalytic core consists of 2 alpha, 1 beta, 1 beta' and 1 omega subunit. When a sigma factor is associated with the core the holoenzyme is formed, which can initiate transcription. It depends on Mg(2+) as a cofactor. Zn(2+) is required as a cofactor.

It carries out the reaction RNA(n) + a ribonucleoside 5'-triphosphate = RNA(n+1) + diphosphate. Its function is as follows. DNA-dependent RNA polymerase catalyzes the transcription of DNA into RNA using the four ribonucleoside triphosphates as substrates. This Legionella pneumophila subsp. pneumophila (strain Philadelphia 1 / ATCC 33152 / DSM 7513) protein is DNA-directed RNA polymerase subunit beta'.